A 78-amino-acid polypeptide reads, in one-letter code: Acyl carrier protein 1 (78 aa).

Residues 2–77 (STIEERVKKI…EAIDYIVAHQ (76 aa)) form the Carrier domain. S37 is subject to O-(pantetheine 4'-phosphoryl)serine.

This sequence belongs to the acyl carrier protein (ACP) family. In terms of processing, 4'-phosphopantetheine is transferred from CoA to a specific serine of apo-ACP by AcpS. This modification is essential for activity because fatty acids are bound in thioester linkage to the sulfhydryl of the prosthetic group.

The protein resides in the cytoplasm. It functions in the pathway lipid metabolism; fatty acid biosynthesis. Functionally, carrier of the growing fatty acid chain in fatty acid biosynthesis. In Pseudomonas aeruginosa (strain ATCC 15692 / DSM 22644 / CIP 104116 / JCM 14847 / LMG 12228 / 1C / PRS 101 / PAO1), this protein is Acyl carrier protein 1.